The sequence spans 418 residues: CinA-like protein (418 aa).

This sequence belongs to the CinA family.

The protein is CinA-like protein of Leptospira interrogans serogroup Icterohaemorrhagiae serovar Lai (strain 56601).